The chain runs to 133 residues: Small ribosomal subunit protein uS8 (133 aa).

It belongs to the universal ribosomal protein uS8 family. As to quaternary structure, part of the 30S ribosomal subunit. Contacts proteins S5 and S12.

One of the primary rRNA binding proteins, it binds directly to 16S rRNA central domain where it helps coordinate assembly of the platform of the 30S subunit. The sequence is that of Small ribosomal subunit protein uS8 from Cyanothece sp. (strain PCC 7425 / ATCC 29141).